Reading from the N-terminus, the 438-residue chain is UDP-N-acetylglucosamine 1-carboxyvinyltransferase 1 (438 aa).

K22–N23 serves as a coordination point for phosphoenolpyruvate. Position 95 (R95) interacts with UDP-N-acetyl-alpha-D-glucosamine. Residue C119 is the Proton donor of the active site. Residue C119 is modified to 2-(S-cysteinyl)pyruvic acid O-phosphothioketal. UDP-N-acetyl-alpha-D-glucosamine-binding positions include R124–L128, D307, and V329.

Belongs to the EPSP synthase family. MurA subfamily.

Its subcellular location is the cytoplasm. The catalysed reaction is phosphoenolpyruvate + UDP-N-acetyl-alpha-D-glucosamine = UDP-N-acetyl-3-O-(1-carboxyvinyl)-alpha-D-glucosamine + phosphate. It participates in cell wall biogenesis; peptidoglycan biosynthesis. Its function is as follows. Cell wall formation. Adds enolpyruvyl to UDP-N-acetylglucosamine. This chain is UDP-N-acetylglucosamine 1-carboxyvinyltransferase 1, found in Lactiplantibacillus plantarum (strain ATCC BAA-793 / NCIMB 8826 / WCFS1) (Lactobacillus plantarum).